We begin with the raw amino-acid sequence, 444 residues long: ATP-dependent protease ATPase subunit HslU (444 aa).

ATP-binding positions include Ile20 and 62 to 67 (GVGKTE). Residues 130 to 158 (EDRILDALVPPPRGASGEPERGEDNSARQ) form a disordered region. ATP-binding residues include Asp257, Glu322, and Arg394.

It belongs to the ClpX chaperone family. HslU subfamily. As to quaternary structure, a double ring-shaped homohexamer of HslV is capped on each side by a ring-shaped HslU homohexamer. The assembly of the HslU/HslV complex is dependent on binding of ATP.

The protein resides in the cytoplasm. In terms of biological role, ATPase subunit of a proteasome-like degradation complex; this subunit has chaperone activity. The binding of ATP and its subsequent hydrolysis by HslU are essential for unfolding of protein substrates subsequently hydrolyzed by HslV. HslU recognizes the N-terminal part of its protein substrates and unfolds these before they are guided to HslV for hydrolysis. In Bordetella parapertussis (strain 12822 / ATCC BAA-587 / NCTC 13253), this protein is ATP-dependent protease ATPase subunit HslU.